Reading from the N-terminus, the 428-residue chain is MRLELGKIFIKDVQFGEKTTVEKGVLYVNKQEIIDLAMQDDRIKSVNVELARPGESVRIAPVKDVIEPRVKVEGSGAMFPGMTNKVKTVGSGRTHALVGSTVLTCGKIVGFQEGVIDMSGPIAKYCPFSETNNVCIVVEPVEGLETHAYEAAARMVGLKAAEYVGKAGLDVEPDEVVVYETKPLLEQIKEYPDLPKVAYVHMLQSQGLLHDTYYYGVDAKQFIPTFMYPTEIMDGAITSGNCVAPCDKVTTFHHLNNPVIEDLYKRHGKDLNSVGVILTNENVYLADKERCSDMVGKLVEFLGIDGVLITEEGYGNPDTDLMMNCKKCTQAGAKVVLITDEFPGRDGKSQSVADATPEADAVASCGQGNLIEHFPAMDKVIGMLDYVETMIGGYKGCINEDGSFDAELQIIIASTIANGYNKLTARFY.

Position 242 is a pyruvic acid (Cys) (cysteine 242).

As to quaternary structure, heterotetramer of two alpha and two beta subunits. Component of the sarcosine reductase complex, together with components A and C. PB is substrate specific. In terms of processing, the peptide chain is cleaved into beta and alpha chains, and the alpha chain N-terminal cysteine is deaminated and oxidized to form a reactive pyruvoyl group.

It catalyses the reaction acetyl phosphate + methylamine + [thioredoxin]-disulfide + H2O = sarcosine + [thioredoxin]-dithiol + phosphate + H(+). Functionally, in the first step of sarcosine reductase, the substrate is bound to component PB via a Schiff base intermediate. Then the PB-activated substrate is nucleophilically attacked by the selenol anion of component PA to transform it to a carboxymethylated selenoether and the respective amine. By action of component PC, acetyl phosphate is formed, leaving component PA in its oxidized state. Finally component PA becomes reduced by the thioredoxin system to start a new catalytic cycle of reductive deamination. This Peptoclostridium acidaminophilum (Eubacterium acidaminophilum) protein is Sarcosine reductase complex component B subunit alpha (grdG).